The following is a 60-amino-acid chain: Large ribosomal subunit protein bL32 (60 aa).

The disordered stretch occupies residues 1–43; sequence MAVQQNRKTRSRRGMRRSHDALTGKTLSVDSTTGEKHLRHHVT. The segment covering 7-16 has biased composition (basic residues); sequence RKTRSRRGMR.

It belongs to the bacterial ribosomal protein bL32 family.

This chain is Large ribosomal subunit protein bL32, found in Saccharophagus degradans (strain 2-40 / ATCC 43961 / DSM 17024).